Reading from the N-terminus, the 48-residue chain is M-oxotoxin-Ot1a (48 aa).

As to expression, expressed by the venom gland.

The protein resides in the secreted. It localises to the target cell membrane. Functionally, disrupts cell membranes, particularly those rich in phosphocholine, through formation of pores. Has antimicrobial activity against Gram-negative bacterium E.coli, Gram-positive bacteria B.subtilis and S.aureus, and hemolytic activity against sheep, pig and guinea pig erythrocytes. Has insecticidal activity against S.frugiperda ovarian cells by opening non-selective ion channels. Enhances the insecticidal activity of spider venom neurotoxic peptides. This chain is M-oxotoxin-Ot1a, found in Oxyopes takobius (Lynx spider).